The chain runs to 184 residues: GTP cyclohydrolase 1 (184 aa).

Zn(2+) contacts are provided by Cys-75, His-78, and Cys-146.

This sequence belongs to the GTP cyclohydrolase I family. Homomer.

It catalyses the reaction GTP + H2O = 7,8-dihydroneopterin 3'-triphosphate + formate + H(+). It participates in cofactor biosynthesis; 7,8-dihydroneopterin triphosphate biosynthesis; 7,8-dihydroneopterin triphosphate from GTP: step 1/1. This Streptococcus pneumoniae (strain ATCC 700669 / Spain 23F-1) protein is GTP cyclohydrolase 1.